The primary structure comprises 671 residues: UvrABC system protein B (671 aa).

One can recognise a Helicase ATP-binding domain in the interval 25–178 (EGIKKGYKHQ…DAMLKKLVEI (154 aa)). 38-45 (GVTGSGKT) serves as a coordination point for ATP. The short motif at 91-114 (YYDYYQPEAYIPETDTYIEKDALI) is the Beta-hairpin element. The Helicase C-terminal domain occupies 435–601 (QVEDLLEEIH…TVKSKIKDIL (167 aa)). Positions 626 to 661 (EETIKKLEQEMKHAAENLEFEKAAEIRDKIFKIKEK) constitute a UVR domain.

It belongs to the UvrB family. In terms of assembly, forms a heterotetramer with UvrA during the search for lesions. Interacts with UvrC in an incision complex.

Its subcellular location is the cytoplasm. Functionally, the UvrABC repair system catalyzes the recognition and processing of DNA lesions. A damage recognition complex composed of 2 UvrA and 2 UvrB subunits scans DNA for abnormalities. Upon binding of the UvrA(2)B(2) complex to a putative damaged site, the DNA wraps around one UvrB monomer. DNA wrap is dependent on ATP binding by UvrB and probably causes local melting of the DNA helix, facilitating insertion of UvrB beta-hairpin between the DNA strands. Then UvrB probes one DNA strand for the presence of a lesion. If a lesion is found the UvrA subunits dissociate and the UvrB-DNA preincision complex is formed. This complex is subsequently bound by UvrC and the second UvrB is released. If no lesion is found, the DNA wraps around the other UvrB subunit that will check the other stand for damage. The polypeptide is UvrABC system protein B (Thermodesulfovibrio yellowstonii (strain ATCC 51303 / DSM 11347 / YP87)).